The primary structure comprises 409 residues: LL-diaminopimelate aminotransferase (409 aa).

The substrate site is built by Tyr15 and Gly42. Pyridoxal 5'-phosphate-binding positions include Tyr72, 108 to 109 (AK), Tyr132, Asn186, Tyr217, and 245 to 247 (SFS). Residues Lys109, Tyr132, and Asn186 each contribute to the substrate site. The residue at position 248 (Lys248) is an N6-(pyridoxal phosphate)lysine. Pyridoxal 5'-phosphate is bound by residues Arg256 and Asn291. The substrate site is built by Asn291 and Arg386.

Belongs to the class-I pyridoxal-phosphate-dependent aminotransferase family. LL-diaminopimelate aminotransferase subfamily. Homodimer. It depends on pyridoxal 5'-phosphate as a cofactor.

The enzyme catalyses (2S,6S)-2,6-diaminopimelate + 2-oxoglutarate = (S)-2,3,4,5-tetrahydrodipicolinate + L-glutamate + H2O + H(+). The protein operates within amino-acid biosynthesis; L-lysine biosynthesis via DAP pathway; LL-2,6-diaminopimelate from (S)-tetrahydrodipicolinate (aminotransferase route): step 1/1. Its function is as follows. Involved in the synthesis of meso-diaminopimelate (m-DAP or DL-DAP), required for both lysine and peptidoglycan biosynthesis. Catalyzes the direct conversion of tetrahydrodipicolinate to LL-diaminopimelate. The sequence is that of LL-diaminopimelate aminotransferase from Desulforapulum autotrophicum (strain ATCC 43914 / DSM 3382 / VKM B-1955 / HRM2) (Desulfobacterium autotrophicum).